A 500-amino-acid chain; its full sequence is Glucose-6-phosphate 1-dehydrogenase (500 aa).

NADP(+) contacts are provided by residues 18–25, R52, and K155; that span reads GASGDLSK. D-glucose 6-phosphate is bound by residues K155, 185 to 189, E223, and D242; that span reads HYLGK. Catalysis depends on H247, which acts as the Proton acceptor. An NADP(+)-binding site is contributed by K338. K341 lines the D-glucose 6-phosphate pocket. NADP(+)-binding residues include K347, R351, and R373. Position 375 (Q375) interacts with D-glucose 6-phosphate. NADP(+) is bound by residues 381 to 383, 401 to 403, and Y483; these read YFK and DLT.

Belongs to the glucose-6-phosphate dehydrogenase family.

The protein resides in the cytoplasm. The protein localises to the cytosol. The enzyme catalyses D-glucose 6-phosphate + NADP(+) = 6-phospho-D-glucono-1,5-lactone + NADPH + H(+). It functions in the pathway carbohydrate degradation; pentose phosphate pathway; D-ribulose 5-phosphate from D-glucose 6-phosphate (oxidative stage): step 1/3. In terms of biological role, catalyzes the rate-limiting step of the oxidative pentose-phosphate pathway, which represents a route for the dissimilation of carbohydrates besides glycolysis. The main function of this enzyme is to provide reducing power (NADPH) and pentose phosphates for fatty acid and nucleic acid synthesis. This is Glucose-6-phosphate 1-dehydrogenase from Schizosaccharomyces pombe (strain 972 / ATCC 24843) (Fission yeast).